We begin with the raw amino-acid sequence, 306 residues long: MWFKNLLIYRLTQDLPVDAEALEAAMATKLARPCASQELTTYGFVAPFGKGEDAPLVHVSGDFLLIAARKEERILPGSVVRDALKEKVEEIEAEQMRKVYKKERDQIKDEIIQAFLPRAFIRRSSTFAAIAPKQGLILVNSASPKRAEDLLSTLREVIGTLPVRPLTVKTAPTAIMTDWVTTQKPADDFFVLDECELRDTHEDGGIVRCKRQDLTSEEIQLHLTTGKVVTQLSLAWQDKLSFMLDDKMTVKRLKFEDLLQDQAEQDGGEEALGQLDASFTLMMLTFGDFLPALVEALGGEETPQGI.

This sequence belongs to the RdgC family.

It localises to the cytoplasm. It is found in the nucleoid. Its function is as follows. May be involved in recombination. This Pseudomonas fluorescens (strain SBW25) protein is Recombination-associated protein RdgC.